Consider the following 179-residue polypeptide: MKFLFDLFPVILFFAAFKLADIYTATAVAIGATVLQIGWVWFRHRKVEPMQWVSLLIIAVFGGATLVLHNETFIKWKPTVLYWLFAAALLGSVLVWRKNLIRAMMEKQVSLPDPVWARLNLAWAGFFAAMGVLNLYVAYQFSTEAWVNFKLFGSMGLMLVFIVAQSVWLSRHMPENTQD.

A run of 6 helical transmembrane segments spans residues 3-23, 24-44, 49-69, 76-96, 121-141, and 149-169; these read FLFD…ADIY, TATA…WFRH, PMQW…LVLH, WKPT…VLVW, LAWA…AYQF, and FKLF…SVWL.

The protein belongs to the YciB family.

The protein localises to the cell inner membrane. Plays a role in cell envelope biogenesis, maintenance of cell envelope integrity and membrane homeostasis. The protein is Inner membrane-spanning protein YciB of Cupriavidus taiwanensis (strain DSM 17343 / BCRC 17206 / CCUG 44338 / CIP 107171 / LMG 19424 / R1) (Ralstonia taiwanensis (strain LMG 19424)).